The following is a 249-amino-acid chain: Uridylate kinase (249 aa).

16–19 lines the ATP pocket; that stretch reads KLSG. Residue G57 coordinates UMP. ATP contacts are provided by G58 and R62. Residues D77 and 138–145 contribute to the UMP site; that span reads AGMPYFST. N166, Y172, and D175 together coordinate ATP.

This sequence belongs to the UMP kinase family. As to quaternary structure, homohexamer.

It is found in the cytoplasm. The catalysed reaction is UMP + ATP = UDP + ADP. It participates in pyrimidine metabolism; CTP biosynthesis via de novo pathway; UDP from UMP (UMPK route): step 1/1. With respect to regulation, inhibited by UTP. Its function is as follows. Catalyzes the reversible phosphorylation of UMP to UDP. The sequence is that of Uridylate kinase from Bifidobacterium adolescentis (strain ATCC 15703 / DSM 20083 / NCTC 11814 / E194a).